Here is a 196-residue protein sequence, read N- to C-terminus: Adenylyl-sulfate kinase (196 aa).

31 to 38 (GLSGAGKS) provides a ligand contact to ATP. The active-site Phosphoserine intermediate is the Ser105.

The protein belongs to the APS kinase family.

It carries out the reaction adenosine 5'-phosphosulfate + ATP = 3'-phosphoadenylyl sulfate + ADP + H(+). It functions in the pathway sulfur metabolism; hydrogen sulfide biosynthesis; sulfite from sulfate: step 2/3. In terms of biological role, catalyzes the synthesis of activated sulfate. The sequence is that of Adenylyl-sulfate kinase from Aeromonas salmonicida (strain A449).